Consider the following 933-residue polypeptide: DNA replication licensing factor MCM4 (933 aa).

Disordered regions lie at residues 1–149 and 154–173; these read MSQQ…PRRI and TRSG…PSEA. The span at 27 to 42 shows a compositional bias: low complexity; it reads PPQLSSPALFYSSSSS. 2 stretches are compositionally biased toward polar residues: residues 49–59 and 69–85; these read RNNSQNLSQGE and SPLN…SDVF. 3 positions are modified to phosphoserine: serine 52, serine 56, and serine 69. Residues 86–103 are compositionally biased toward low complexity; sequence QSQGRQGRIRSSASASGR. The segment covering 117 to 129 has biased composition (polar residues); sequence PTSSSSLGRNGQN. Residues 164–173 are compositionally biased toward low complexity; the sequence is SSSSAPPSEA. The region spanning 518 to 725 is the MCM domain; the sequence is LYSLLARSIA…NDRELAKHLT (208 aa). 568–575 contributes to the ATP binding site; that stretch reads GDPSTSKS. Residues 700 to 703 carry the Arginine finger motif; sequence SRFD.

Belongs to the MCM family. In terms of assembly, component of the MCM2-7 complex. The complex forms a toroidal hexameric ring with the proposed subunit order MCM2-MCM6-MCM4-MCM7-MCM3-MCM5; loaded onto DNA, forms a head-head double hexamer.

The protein resides in the nucleus. The catalysed reaction is ATP + H2O = ADP + phosphate + H(+). Functionally, acts as a component of the MCM2-7 complex (MCM complex) which is the putative replicative helicase essential for 'once per cell cycle' DNA replication initiation and elongation in eukaryotic cells. The active ATPase sites in the MCM2-7 ring are formed through the interaction surfaces of two neighboring subunits such that a critical structure of a conserved arginine finger motif is provided in trans relative to the ATP-binding site of the Walker A box of the adjacent subunit. The six ATPase active sites, however, are likely to contribute differentially to the complex helicase activity. Once loaded onto DNA, double hexamers can slide on dsDNA in the absence of ATPase activity. Required for S phase execution. This is DNA replication licensing factor MCM4 (MCM4) from Saccharomyces cerevisiae (strain ATCC 204508 / S288c) (Baker's yeast).